The following is a 222-amino-acid chain: Glutathione S-transferase alpha-1 (222 aa).

M1 is subject to N-acetylmethionine. Positions 3–83 (GKPVLHYFNA…YIATKYDLYG (81 aa)) constitute a GST N-terminal domain. K4 is subject to N6-succinyllysine. Residues Y9, K45, 54–55 (QV), and 67–68 (QT) contribute to the glutathione site. The region spanning 85–208 (DMKERALIDM…QPGSQRKLPV (124 aa)) is the GST C-terminal domain.

Belongs to the GST superfamily. Alpha family. As to quaternary structure, homodimer. Homodimer or heterodimer of GSTA1 and GSTA2.

Its subcellular location is the cytoplasm. It catalyses the reaction RX + glutathione = an S-substituted glutathione + a halide anion + H(+). The catalysed reaction is prostaglandin A2 + glutathione = prostaglandin A2-S-(R)-glutathione. The enzyme catalyses prostaglandin J2 + glutathione = prostaglandin J2-S-(R)-glutathione. It carries out the reaction (13S)-hydroperoxy-(9Z,11E)-octadecadienoate + 2 glutathione = (13S)-hydroxy-(9Z,11E)-octadecadienoate + glutathione disulfide + H2O. It catalyses the reaction androst-5-ene-3,17-dione = androst-4-ene-3,17-dione. Its function is as follows. Glutathione S-transferase that catalyzes the nucleophilic attack of the sulfur atom of glutathione on the electrophilic groups of a wide range of exogenous and endogenous compounds. Involved in the formation of glutathione conjugates of both prostaglandin A2 (PGA2) and prostaglandin J2 (PGJ2). It also catalyzes the isomerization of D5-androstene-3,17-dione (AD) into D4-androstene-3,17-dione and may therefore play an important role in hormone biosynthesis. Through its glutathione-dependent peroxidase activity toward the fatty acid hydroperoxide (13S)-hydroperoxy-(9Z,11E)-octadecadienoate/13-HPODE it is also involved in the metabolism of oxidized linoleic acid. The protein is Glutathione S-transferase alpha-1 (Gsta1) of Rattus norvegicus (Rat).